The primary structure comprises 238 residues: Sugar fermentation stimulation protein homolog (238 aa).

Belongs to the SfsA family.

This chain is Sugar fermentation stimulation protein homolog, found in Haemophilus influenzae (strain 86-028NP).